The sequence spans 82 residues: Ranatensin (82 aa).

Positions 1 to 27 (MTTIPAIGILPIDFLTILLLFSFISHS) are cleaved as a signal peptide. The propeptide occupies 28 to 47 (VCVEFAEDAGELDKSNAFRR). Methionine amide is present on Met-58. Positions 62–82 (SLSDDTEQATMYSSRFVESTS) are excised as a propeptide.

Belongs to the bombesin/neuromedin-B/ranatensin family. In terms of tissue distribution, expressed by the skin glands.

It localises to the secreted. The protein is Ranatensin of Lithobates pipiens (Northern leopard frog).